Here is a 232-residue protein sequence, read N- to C-terminus: Sugar fermentation stimulation protein homolog (232 aa).

It belongs to the SfsA family.

This is Sugar fermentation stimulation protein homolog from Acidithiobacillus ferrooxidans (strain ATCC 23270 / DSM 14882 / CIP 104768 / NCIMB 8455) (Ferrobacillus ferrooxidans (strain ATCC 23270)).